The primary structure comprises 65 residues: Small vasohibin-binding protein (65 aa).

Residues 1 to 22 show a composition bias toward basic and acidic residues; that stretch reads MEPACRKDKQKQQTPTRGDRTK. Residues 1–30 are disordered; it reads MEPACRKDKQKQQTPTRGDRTKQKTAQQEL. The stretch at 31-51 forms a coiled coil; that stretch reads KQRQRAEIYALNKVMTELEQQ.

This sequence belongs to the SVBP family.

Its subcellular location is the cytoplasm. It localises to the secreted. It is found in the cytoskeleton. In terms of biological role, enhances the tyrosine carboxypeptidase activity of vash1 and vash2, thereby promoting the removal of the C-terminal tyrosine residue of alpha-tubulin. Also required to enhance the solubility and secretion of vash1 and vash2. May play a role in axon and excitatory synapse formation. In Danio rerio (Zebrafish), this protein is Small vasohibin-binding protein.